Reading from the N-terminus, the 296-residue chain is Short-chain dehydrogenase/reductase ascJ (296 aa).

Positions 28, 66, and 93 each coordinate NADP(+). The active-site Proton donor is the Ser155. 3 residues coordinate NADP(+): Tyr168, Lys172, and Thr205. The Proton acceptor role is filled by Tyr168. The active-site Lowers pKa of active site Tyr is the Lys172.

The protein belongs to the short-chain dehydrogenases/reductases (SDR) family.

It catalyses the reaction ascofuranol + A = ascofuranone + AH2. It participates in secondary metabolite biosynthesis; terpenoid biosynthesis. In terms of biological role, short-chain dehydrogenase/reductase; part of the asc-2 gene cluster that mediates the biosynthesis of ascofuranone, a strong inhibitor of cyanide-insensitive alternative oxidases and a promising drug candidate against African trypanosomiasis. The first step in the pathway is performed by the non-reducing polyketide synthase ascC that produces orsellinic acid by condensing acetyl-CoA with 3 malonyl-CoA units. Orsellinic acid is then prenylated by the prenyltransferase ascA to yield ilicicolinic acid B. Ilicicolinic acid B is further reduced to ilicicolin B by the reductase ascB. The halogenase ascD then chlorinates ilicicolin B to produce ilicicolin A which is converted to ilicicolin A epoxide by the cytochrome P450 monooxygenase ascE that catalyzes stereoselective epoxidation of the terminal double bond of the prenyl group. Ilicicolin A epoxide is the last common precursor for the biosynthesis of ascofuranone and ascochlorin. The terpene cyclase ascF produces a monocyclic terpene, and the cyclization reaction is proposed to be initiated by protonation of the terminal epoxide of ilicicolin A epoxide to generate a monocyclic tertiarycation, which is followed by a series of hydride and methyl shifts with abstraction of proton, leading to the formation of the (14S,15R,19R)-trimethylcyclohexanone ring structure of ilicicolin C, which is finally reduced to ascochlorin by the dehydrogenase ascG. On the other hand, ilicicolin A epoxide is hydroxylated by the cytochrome P450 monooxygenase ascH, and the resultant product is cyclized by the terpene cyclase ascI to ascofuranol via protonation-initiated epoxide ring opening, which facilitates the 6-endo-tet cyclization to form the tetrahy-drofuran ring. Finally, ascofuranol is oxidized into ascofuranone by ascJ. The chain is Short-chain dehydrogenase/reductase ascJ from Acremonium egyptiacum (Oospora egyptiaca).